Here is a 103-residue protein sequence, read N- to C-terminus: Histone H4 (103 aa).

Over residues 1-14 (MSGRGKGGKGLGKG) the composition is skewed to gly residues. Residues 1-20 (MSGRGKGGKGLGKGGAKRHR) are disordered. The DNA-binding element occupies 17-21 (KRHRK).

The protein belongs to the histone H4 family. The nucleosome is a histone octamer containing two molecules each of H2A, H2B, H3 and H4 assembled in one H3-H4 heterotetramer and two H2A-H2B heterodimers. The octamer wraps approximately 147 bp of DNA.

Its subcellular location is the nucleus. The protein resides in the chromosome. Core component of nucleosome. Nucleosomes wrap and compact DNA into chromatin, limiting DNA accessibility to the cellular machineries which require DNA as a template. Histones thereby play a central role in transcription regulation, DNA repair, DNA replication and chromosomal stability. DNA accessibility is regulated via a complex set of post-translational modifications of histones, also called histone code, and nucleosome remodeling. This is Histone H4 (H4-I) from Chlamydomonas reinhardtii (Chlamydomonas smithii).